We begin with the raw amino-acid sequence, 351 residues long: Protein RecA (351 aa).

68–75 (GPESSGKT) provides a ligand contact to ATP.

This sequence belongs to the RecA family.

The protein localises to the cytoplasm. In terms of biological role, can catalyze the hydrolysis of ATP in the presence of single-stranded DNA, the ATP-dependent uptake of single-stranded DNA by duplex DNA, and the ATP-dependent hybridization of homologous single-stranded DNAs. It interacts with LexA causing its activation and leading to its autocatalytic cleavage. The chain is Protein RecA from Chloroflexus aggregans (strain MD-66 / DSM 9485).